A 417-amino-acid chain; its full sequence is Serine hydroxymethyltransferase 3 (417 aa).

Residues Leu121 and 125-127 (GHL) each bind (6S)-5,6,7,8-tetrahydrofolate. An N6-(pyridoxal phosphate)lysine modification is found at Lys229. (6S)-5,6,7,8-tetrahydrofolate is bound at residue 354–356 (SPF).

It belongs to the SHMT family. In terms of assembly, homodimer. Requires pyridoxal 5'-phosphate as cofactor.

It localises to the cytoplasm. It carries out the reaction (6R)-5,10-methylene-5,6,7,8-tetrahydrofolate + glycine + H2O = (6S)-5,6,7,8-tetrahydrofolate + L-serine. Its pathway is one-carbon metabolism; tetrahydrofolate interconversion. The protein operates within amino-acid biosynthesis; glycine biosynthesis; glycine from L-serine: step 1/1. Its function is as follows. Catalyzes the reversible interconversion of serine and glycine with tetrahydrofolate (THF) serving as the one-carbon carrier. This reaction serves as the major source of one-carbon groups required for the biosynthesis of purines, thymidylate, methionine, and other important biomolecules. Also exhibits THF-independent aldolase activity toward beta-hydroxyamino acids, producing glycine and aldehydes, via a retro-aldol mechanism. In Pseudomonas aeruginosa (strain ATCC 15692 / DSM 22644 / CIP 104116 / JCM 14847 / LMG 12228 / 1C / PRS 101 / PAO1), this protein is Serine hydroxymethyltransferase 3.